The chain runs to 295 residues: Acetylglutamate kinase (295 aa).

Substrate is bound by residues 64 to 65 (GG), arginine 86, and asparagine 190.

It belongs to the acetylglutamate kinase family. ArgB subfamily.

It localises to the cytoplasm. The enzyme catalyses N-acetyl-L-glutamate + ATP = N-acetyl-L-glutamyl 5-phosphate + ADP. It participates in amino-acid biosynthesis; L-arginine biosynthesis; N(2)-acetyl-L-ornithine from L-glutamate: step 2/4. Catalyzes the ATP-dependent phosphorylation of N-acetyl-L-glutamate. This is Acetylglutamate kinase from Pelotomaculum thermopropionicum (strain DSM 13744 / JCM 10971 / SI).